A 510-amino-acid polypeptide reads, in one-letter code: NAD(P)H-quinone oxidoreductase subunit 2 B, chloroplastic (510 aa).

Transmembrane regions (helical) follow at residues 24 to 44 (LLLFHGSFIFPECILIFGLIL), 59 to 79 (WFYFISSTSLVISITALLFRW), 99 to 119 (IFQFLILLCSTLCIPLSVEYI), 124 to 144 (MAITEFLLFVLTATLGGMFLC), 149 to 169 (LITIFVALECFSLCSYLLSGY), 184 to 204 (LLMGGASSSILVYGFSWLYGL), 229 to 249 (ISIALIFITVGLGFKLSLAPF), 261 to 281 (PTPVVAFLSVTSKVAALALAT), 295 to 315 (WHLLLEILAILSMILGNLLAI), 323 to 343 (MLAYSSIGQIGYVIIGIIVGD), 354 to 374 (YMLFYISMNLGTFACIVLFGL), 395 to 415 (ALSLALCLLSLGGLPPLAGFF), 418 to 438 (LYLFWCGWQAGLYFLVSIGLL), and 484 to 504 (MTVCVIASTILGISMNPILAI).

Belongs to the complex I subunit 2 family. As to quaternary structure, NDH is composed of at least 16 different subunits, 5 of which are encoded in the nucleus.

The protein resides in the plastid. The protein localises to the chloroplast thylakoid membrane. It catalyses the reaction a plastoquinone + NADH + (n+1) H(+)(in) = a plastoquinol + NAD(+) + n H(+)(out). The enzyme catalyses a plastoquinone + NADPH + (n+1) H(+)(in) = a plastoquinol + NADP(+) + n H(+)(out). In terms of biological role, NDH shuttles electrons from NAD(P)H:plastoquinone, via FMN and iron-sulfur (Fe-S) centers, to quinones in the photosynthetic chain and possibly in a chloroplast respiratory chain. The immediate electron acceptor for the enzyme in this species is believed to be plastoquinone. Couples the redox reaction to proton translocation, and thus conserves the redox energy in a proton gradient. In Zea mays (Maize), this protein is NAD(P)H-quinone oxidoreductase subunit 2 B, chloroplastic.